Consider the following 1673-residue polypeptide: Glutamine and serine-rich protein 1 (1673 aa).

Disordered regions lie at residues 265-322 (VIPS…SSQA), 411-543 (DQTR…KSYV), 872-892 (RHMS…LSIN), 923-961 (QDLP…PKEG), 1050-1081 (DENA…QYSS), 1149-1182 (VIRP…KAEE), 1216-1272 (LSAL…EQLA), and 1390-1476 (KSKV…PPPI). Positions 289 to 309 (SSKTPKSQSVVSPELTQSYTK) are enriched in polar residues. Composition is skewed to low complexity over residues 310–322 (SSQN…SSQA) and 411–458 (DQTR…PSDS). Over residues 459–539 (YTSGQNQTLA…MQNSRTTADS (81 aa)) the composition is skewed to polar residues. Over residues 947–956 (NIKNPPNVNQ) the composition is skewed to polar residues. The span at 1222-1233 (NSEKRLKTEGDK) shows a compositional bias: basic and acidic residues. Polar residues-rich tracts occupy residues 1259–1272 (KPSQ…EQLA) and 1397–1411 (ARTT…SKVS). The span at 1435–1451 (TKAEPPPKKRKQWKEEF) shows a compositional bias: basic and acidic residues. Low complexity predominate over residues 1452 to 1462 (SSSQSDSSPDM).

It localises to the chromosome. Functionally, plays an essential role in the protection and maintenance of transcriptional and developmental programs. Protects many bivalent promoters and poised enhancers from hypermethylation, showing a marked preference for these regulatory elements over other types of promoters or enhancers. Mechanistically, cooperates with tet1 and binds to DNA in a common complex to inhibit the binding of dnmt3a/3b and therefore de novo methylation. The sequence is that of Glutamine and serine-rich protein 1 (qser1) from Xenopus laevis (African clawed frog).